A 138-amino-acid chain; its full sequence is Large ribosomal subunit protein uL16 (138 aa).

Positions M1–Q13 are enriched in basic residues. The disordered stretch occupies residues M1–G24.

This sequence belongs to the universal ribosomal protein uL16 family. In terms of assembly, part of the 50S ribosomal subunit.

Binds 23S rRNA and is also seen to make contacts with the A and possibly P site tRNAs. This Burkholderia ambifaria (strain ATCC BAA-244 / DSM 16087 / CCUG 44356 / LMG 19182 / AMMD) (Burkholderia cepacia (strain AMMD)) protein is Large ribosomal subunit protein uL16.